Consider the following 342-residue polypeptide: MTETSLSSQCFPMSVLNNTIAEPLIFLLMGIPGLKATQYWISIPFCLLYVVAVSGNSMILFVVLCERSLHKPMYYFLSMLSATDLSLSLCTLSTTLGVFWFEAREINLNACIAQMFFLHGFTFMESGVLLAMAFDRFVAICYPLRYTTILTNARIAKIGMSMLIRNVAVMLPVMLFVKRLSFCSSMVLSHSYCYHVDLIQLSCTDNRINSILGLFALLSTTGFDCPCILLSYILIIRSVLSIASSEERRKAFNTCTSHISAVSIFYLPLISLSLVHRYGHSAPPFVHIIMANVFLLIPPVLNPIIYSVKIKQIQKAIIKVLIQKHSKSNHQLFLIRDKAIYE.

Residues 1-39 (MTETSLSSQCFPMSVLNNTIAEPLIFLLMGIPGLKATQY) lie on the Extracellular side of the membrane. Residue Asn17 is glycosylated (N-linked (GlcNAc...) asparagine). The helical transmembrane segment at 40-60 (WISIPFCLLYVVAVSGNSMIL) threads the bilayer. The Cytoplasmic segment spans residues 61-68 (FVVLCERS). Residues 69 to 89 (LHKPMYYFLSMLSATDLSLSL) traverse the membrane as a helical segment. The Extracellular portion of the chain corresponds to 90–113 (CTLSTTLGVFWFEAREINLNACIA). An intrachain disulfide couples Cys111 to Cys203. Residues 114–134 (QMFFLHGFTFMESGVLLAMAF) traverse the membrane as a helical segment. The Cytoplasmic portion of the chain corresponds to 135-153 (DRFVAICYPLRYTTILTNA). A helical membrane pass occupies residues 154–174 (RIAKIGMSMLIRNVAVMLPVM). At 175–210 (LFVKRLSFCSSMVLSHSYCYHVDLIQLSCTDNRINS) the chain is on the extracellular side. A helical membrane pass occupies residues 211-231 (ILGLFALLSTTGFDCPCILLS). The Cytoplasmic portion of the chain corresponds to 232–251 (YILIIRSVLSIASSEERRKA). Residues 252–272 (FNTCTSHISAVSIFYLPLISL) form a helical membrane-spanning segment. Residues 273 to 287 (SLVHRYGHSAPPFVH) lie on the Extracellular side of the membrane. A helical transmembrane segment spans residues 288–308 (IIMANVFLLIPPVLNPIIYSV). At 309–342 (KIKQIQKAIIKVLIQKHSKSNHQLFLIRDKAIYE) the chain is on the cytoplasmic side.

This sequence belongs to the G-protein coupled receptor 1 family.

It is found in the cell membrane. Functionally, odorant receptor. This chain is Olfactory receptor 51F2 (OR51F2), found in Homo sapiens (Human).